The primary structure comprises 636 residues: Ligand-gated ion channel 4 (636 aa).

An N-terminal signal peptide occupies residues M1 to G25. At M26–Y326 the chain is on the extracellular side. N45, N141, N179, and N227 each carry an N-linked (GlcNAc...) asparagine glycan. An intrachain disulfide couples C240 to C254. The N-linked (GlcNAc...) asparagine glycan is linked to N284. 3 consecutive transmembrane segments (helical) span residues V327 to M347, M357 to P377, and V383 to V403. The Cytoplasmic portion of the chain corresponds to N404 to L602. The chain crosses the membrane as a helical span at residues L603–V623.

This sequence belongs to the ligand-gated ion channel (TC 1.A.9) family.

Its subcellular location is the postsynaptic cell membrane. The protein localises to the cell membrane. Acetylcholine receptor. The chain is Ligand-gated ion channel 4 from Caenorhabditis briggsae.